The chain runs to 65 residues: DNA-directed RNA polymerase subunit Rpo10 (65 aa).

Zn(2+)-binding residues include Cys-7, Cys-10, Cys-44, and Cys-45.

It belongs to the archaeal Rpo10/eukaryotic RPB10 RNA polymerase subunit family. As to quaternary structure, part of the RNA polymerase complex. Zn(2+) is required as a cofactor.

Its subcellular location is the cytoplasm. The enzyme catalyses RNA(n) + a ribonucleoside 5'-triphosphate = RNA(n+1) + diphosphate. Functionally, DNA-dependent RNA polymerase (RNAP) catalyzes the transcription of DNA into RNA using the four ribonucleoside triphosphates as substrates. This chain is DNA-directed RNA polymerase subunit Rpo10, found in Thermococcus onnurineus (strain NA1).